Consider the following 1374-residue polypeptide: DNA-directed RNA polymerase subunit beta' (1374 aa).

Residues 1–47 (MTSTSPKSRKPSTKTTKSKSKSKSKSKAAKAAAASASPALARTPPQF) are disordered. Residues 7-28 (KSRKPSTKTTKSKSKSKSKSKA) show a composition bias toward basic residues. The segment covering 29 to 45 (AKAAAASASPALARTPP) has biased composition (low complexity). Zn(2+)-binding residues include Cys258, Cys325, Cys332, and Cys335. The disordered stretch occupies residues 1343–1374 (VRPTGENELEEEQLPDPSALEGLQQEGLLTEE). Low complexity predominate over residues 1362–1374 (LEGLQQEGLLTEE).

This sequence belongs to the RNA polymerase beta' chain family. RpoC2 subfamily. In cyanobacteria the RNAP catalytic core is composed of 2 alpha, 1 beta, 1 beta', 1 gamma and 1 omega subunit. When a sigma factor is associated with the core the holoenzyme is formed, which can initiate transcription. The cofactor is Zn(2+).

It catalyses the reaction RNA(n) + a ribonucleoside 5'-triphosphate = RNA(n+1) + diphosphate. DNA-dependent RNA polymerase catalyzes the transcription of DNA into RNA using the four ribonucleoside triphosphates as substrates. This is DNA-directed RNA polymerase subunit beta' from Prochlorococcus marinus (strain MIT 9303).